Reading from the N-terminus, the 389-residue chain is Alpha-2B adrenergic receptor (389 aa).

Residues 1–25 (AIAAVITFLILFTIFGNALVILAVL) traverse the membrane as a helical segment. Topologically, residues 26 to 36 (TSRSLRAPQNL) are cytoplasmic. The chain crosses the membrane as a helical span at residues 37-62 (FLVSLAAADILVATLIIPFSLANELL). At 63-72 (GYWYFWRTWC) the chain is on the extracellular side. The cysteines at positions 72 and 151 are disulfide-linked. A helical transmembrane segment spans residues 73–95 (EVYLALDVLFCTSSIVHLCAISL). Residues 96 to 117 (DRYWAVSRALEYNSKRTPRRIK) lie on the Cytoplasmic side of the membrane. A helical transmembrane segment spans residues 118–140 (CIILTVWLIAAAISLPPLIYKGD). Topologically, residues 141-156 (QGPQPRGRPQCMLNQE) are extracellular. The helical transmembrane segment at 157–180 (AWYILSSSIGSFFAPCLIMILVYL) threads the bilayer. Residues 181-353 (RIYLIAKRSN…LTREKRFTFV (173 aa)) lie on the Cytoplasmic side of the membrane. 2 disordered regions span residues 192 to 218 (RGPRAKGAPGEGESKQPHPLTAGPLAL) and 231 to 310 (DGEA…HLQQ). Positions 234-249 (ANGHSKLTGEKERETS) are enriched in basic and acidic residues. The helical transmembrane segment at 354 to 377 (LTVVIGVFVLCWFPFFFSYSLGAI) threads the bilayer. Topologically, residues 378 to 386 (CPQHCKVPH) are extracellular. Residues 387–389 (GLF) form a helical membrane-spanning segment.

It belongs to the G-protein coupled receptor 1 family. Adrenergic receptor subfamily. ADRA2B sub-subfamily. As to quaternary structure, interacts with RAB26. Interacts with PPP1R9B.

It is found in the cell membrane. In terms of biological role, alpha-2 adrenergic receptors mediate the catecholamine-induced inhibition of adenylate cyclase through the action of G proteins. The chain is Alpha-2B adrenergic receptor (ADRA2B) from Procavia capensis habessinica (Abyssinian hyrax).